The chain runs to 220 residues: MKRSASDSPLLFDLPLAPDFSQEQQLMKRGLKHIAGIDEAGRGPLAGPVVAAAVVLDQNDLPEGLDDSKRLTAARREALYEIILTKAITVSVASLSARSIDASDIRKAALEAMRRAVIGLTLKPCHALVDGRDVPPGLPCPGSALVKGDQRSVSIAAASIVAKVTRDRMMIRAGAAHPPYGLEIHAGYATQKHRAAIESEGPVPGLHRYTFAPIKGCFDC.

The RNase H type-2 domain occupies lysine 32–cysteine 220. A divalent metal cation-binding residues include aspartate 38, glutamate 39, and aspartate 130.

Belongs to the RNase HII family. Mn(2+) serves as cofactor. The cofactor is Mg(2+).

It localises to the cytoplasm. The catalysed reaction is Endonucleolytic cleavage to 5'-phosphomonoester.. Endonuclease that specifically degrades the RNA of RNA-DNA hybrids. This chain is Ribonuclease HII, found in Brucella abortus (strain 2308).